The primary structure comprises 68 residues: Large ribosomal subunit protein uL29 (68 aa).

It belongs to the universal ribosomal protein uL29 family.

This Methanobrevibacter smithii (strain ATCC 35061 / DSM 861 / OCM 144 / PS) protein is Large ribosomal subunit protein uL29.